The primary structure comprises 899 residues: Tubulin glycylase 3F (899 aa).

Positions 471–835 (FKDVIQIIKN…TEYYQIQNWK (365 aa)) constitute a TTL domain. ATP-binding positions include 642-645 (QKYI), lysine 663, and aspartate 665.

The protein localises to the cytoplasm. Its subcellular location is the cytoskeleton. It localises to the cilium basal body. Probable glycylase which modifies tubulin, generating side chains of glycine on the gamma-carboxyl groups of specific glutamate residues within the C-terminal tail of tubulin. This is Tubulin glycylase 3F (TTLL3F) from Tetrahymena thermophila (strain SB210).